The sequence spans 433 residues: Signal recognition particle 54 kDa protein (433 aa).

GTP-binding positions include 106 to 113 (GVEGSGKT), 186 to 190 (DTAGR), and 244 to 247 (TKMD).

The protein belongs to the GTP-binding SRP family. SRP54 subfamily. Part of the signal recognition particle protein translocation system, which is composed of SRP and FtsY. Archaeal SRP consists of a 7S RNA molecule of 300 nucleotides and two protein subunits: SRP54 and SRP19.

Its subcellular location is the cytoplasm. It catalyses the reaction GTP + H2O = GDP + phosphate + H(+). Functionally, involved in targeting and insertion of nascent membrane proteins into the cytoplasmic membrane. Binds to the hydrophobic signal sequence of the ribosome-nascent chain (RNC) as it emerges from the ribosomes. The SRP-RNC complex is then targeted to the cytoplasmic membrane where it interacts with the SRP receptor FtsY. The polypeptide is Signal recognition particle 54 kDa protein (Pyrobaculum arsenaticum (strain DSM 13514 / JCM 11321 / PZ6)).